A 449-amino-acid polypeptide reads, in one-letter code: Tubulin alpha-1C chain (449 aa).

The MREC motif signature appears at 1 to 4 (MREC). Glutamine 11 serves as a coordination point for GTP. Lysine 40 bears the N6-acetyllysine mark. GTP is bound by residues glutamate 71, serine 140, glycine 144, threonine 145, threonine 179, asparagine 206, and asparagine 228. Glutamate 71 serves as a coordination point for Mg(2+). Glutamate 254 is a catalytic residue. The residue at position 282 (tyrosine 282) is a 3'-nitrotyrosine. Residue tyrosine 432 is modified to Phosphotyrosine. At serine 439 the chain carries Phosphoserine. Tyrosine 449 carries the 3'-nitrotyrosine modification.

The protein belongs to the tubulin family. As to quaternary structure, dimer of alpha and beta chains. A typical microtubule is a hollow water-filled tube with an outer diameter of 25 nm and an inner diameter of 15 nM. Alpha-beta heterodimers associate head-to-tail to form protofilaments running lengthwise along the microtubule wall with the beta-tubulin subunit facing the microtubule plus end conferring a structural polarity. Microtubules usually have 13 protofilaments but different protofilament numbers can be found in some organisms and specialized cells. Requires Mg(2+) as cofactor. In terms of processing, some glutamate residues at the C-terminus are polyglycylated, resulting in polyglycine chains on the gamma-carboxyl group. Glycylation is mainly limited to tubulin incorporated into axonemes (cilia and flagella) whereas glutamylation is prevalent in neuronal cells, centrioles, axonemes, and the mitotic spindle. Both modifications can coexist on the same protein on adjacent residues, and lowering polyglycylation levels increases polyglutamylation, and reciprocally. Cilia and flagella glycylation is required for their stability and maintenance. Flagella glycylation controls sperm motility. Some glutamate residues at the C-terminus are polyglutamylated, resulting in polyglutamate chains on the gamma-carboxyl group. Polyglutamylation plays a key role in microtubule severing by spastin (SPAST). SPAST preferentially recognizes and acts on microtubules decorated with short polyglutamate tails: severing activity by SPAST increases as the number of glutamates per tubulin rises from one to eight, but decreases beyond this glutamylation threshold. Glutamylation is also involved in cilia motility. Post-translationally, acetylation of alpha chains at Lys-40 is located inside the microtubule lumen. This modification has been correlated with increased microtubule stability, intracellular transport and ciliary assembly. In terms of processing, methylation of alpha chains at Lys-40 is found in mitotic microtubules and is required for normal mitosis and cytokinesis contributing to genomic stability. Nitration of Tyr-449 is irreversible and interferes with normal dynein intracellular distribution. Post-translationally, undergoes a tyrosination/detyrosination cycle, the cyclic removal and re-addition of a C-terminal tyrosine residue by the enzymes tubulin tyrosine carboxypeptidase (MATCAP1, VASH1 or VASH2) and tubulin tyrosine ligase (TTL), respectively. In terms of processing, tyrosination promotes microtubule interaction with CAP-Gly domain-containing proteins such as CLIP1, CLIP2 and DCTN1. Tyrosination regulates the initiation of dynein-dynactin motility via interaction with DCTN1, which brings the dynein-dynactin complex into contact with microtubules. In neurons, tyrosinated tubulins mediate the initiation of retrograde vesicle transport. Detyrosination is involved in metaphase plate congression by guiding chromosomes during mitosis: detyrosination promotes interaction with CENPE, promoting pole-proximal transport of chromosomes toward the equator. Detyrosination increases microtubules-dependent mechanotransduction in dystrophic cardiac and skeletal muscle. In cardiomyocytes, detyrosinated microtubules are required to resist to contractile compression during contraction: detyrosination promotes association with desmin (DES) at force-generating sarcomeres, leading to buckled microtubules and mechanical resistance to contraction. Minor alpha-tubulin expressed in all tissues.

The protein resides in the cytoplasm. It is found in the cytoskeleton. The catalysed reaction is GTP + H2O = GDP + phosphate + H(+). Tubulin is the major constituent of microtubules, a cylinder consisting of laterally associated linear protofilaments composed of alpha- and beta-tubulin heterodimers. Microtubules grow by the addition of GTP-tubulin dimers to the microtubule end, where a stabilizing cap forms. Below the cap, tubulin dimers are in GDP-bound state, owing to GTPase activity of alpha-tubulin. The protein is Tubulin alpha-1C chain (Tuba1c) of Mus musculus (Mouse).